Here is a 464-residue protein sequence, read N- to C-terminus: Chromosomal replication initiator protein DnaA (464 aa).

The segment at 1–74 is domain I, interacts with DnaA modulators; the sequence is MDAVGYEVFW…ERKFLELSGH (74 aa). A domain II region spans residues 74-117; that stretch reads HPIKLLFAVKKGTPHGNTAPPKHVHTYLEKNSPAEVPSKKSFHP. The segment at 118 to 341 is domain III, AAA+ region; that stretch reads DLNRDYTFEN…GALTKIIAFI (224 aa). ATP is bound by residues glycine 162, glycine 164, lysine 165, and threonine 166. Residues 342 to 464 form a domain IV, binds dsDNA region; it reads EVSGSITIDI…LKSKVQDSIR (123 aa).

This sequence belongs to the DnaA family. As to quaternary structure, oligomerizes as a right-handed, spiral filament on DNA at oriC.

The protein localises to the cytoplasm. In terms of biological role, plays an essential role in the initiation and regulation of chromosomal replication. ATP-DnaA binds to the origin of replication (oriC) to initiate formation of the DNA replication initiation complex once per cell cycle. Binds the DnaA box (a 9 base pair repeat at the origin) and separates the double-stranded (ds)DNA. Forms a right-handed helical filament on oriC DNA; dsDNA binds to the exterior of the filament while single-stranded (ss)DNA is stabiized in the filament's interior. The ATP-DnaA-oriC complex binds and stabilizes one strand of the AT-rich DNA unwinding element (DUE), permitting loading of DNA polymerase. After initiation quickly degrades to an ADP-DnaA complex that is not apt for DNA replication. Binds acidic phospholipids. This is Chromosomal replication initiator protein DnaA from Treponema pallidum (strain Nichols).